Reading from the N-terminus, the 423-residue chain is MLSQKSIQIIKSTVPLLEKYGVEITSLFYKNMFEAQPQFLNIFNHSNQRNQKQPVALANTILQSAIHIEKLNEINLMPIVHKHVALGITPEMYPIVGAHLLGAMKTVMQDEATPEIMAAWTEAYRAVAQAFMDAEEDLYFETEEQIGGWKDTREFVVDRIEEETPLIKSFYFKAYDGKEIATYIPGQYITVKITLPGDGVDVPTDKMRTYVRHYSLSDKPNDEYYRISIKKELGKNTPNGIVSNHFHNNIKVGDVVPMSVPAGDFVVNNDSETPILLICGGVGINPLFSMLKETLVQQPDRKINFIFSTHCESSQPFKEELKQLEDDYKETGNLKINLVYSENQGHINKEIIEKYSTQHVDQAEIAETDVYICGPVPFMMQVNKDLLQLGFHKENVHYELFGPLTPVLEENQMLRGVKNIIEN.

The Globin domain occupies 1 to 136 (MLSQKSIQII…VAQAFMDAEE (136 aa)). Position 83 (His-83) interacts with heme b. Residues Tyr-93 and Glu-135 each act as charge relay system in the active site. Residues 149 to 423 (WKDTREFVVD…LRGVKNIIEN (275 aa)) are reductase. The 119-residue stretch at 150-268 (KDTREFVVDR…SVPAGDFVVN (119 aa)) folds into the FAD-binding FR-type domain. FAD contacts are provided by residues Tyr-188 and 212–215 (RHYS). Residue 281-286 (GVGINP) coordinates NADP(+). 400-403 (LFGP) contacts FAD.

Belongs to the globin family. Two-domain flavohemoproteins subfamily. It in the C-terminal section; belongs to the flavoprotein pyridine nucleotide cytochrome reductase family. FAD is required as a cofactor. Heme b serves as cofactor.

Its subcellular location is the cytoplasm. It carries out the reaction 2 nitric oxide + NADPH + 2 O2 = 2 nitrate + NADP(+) + H(+). The enzyme catalyses 2 nitric oxide + NADH + 2 O2 = 2 nitrate + NAD(+) + H(+). In terms of biological role, is involved in NO detoxification in an aerobic process, termed nitric oxide dioxygenase (NOD) reaction that utilizes O(2) and NAD(P)H to convert NO to nitrate, which protects the cell from various noxious nitrogen compounds. Therefore, plays a central role in the inducible response to nitrosative stress. In the presence of oxygen and NADH, it has NADH oxidase activity, which leads to the generation of superoxide and H(2)O(2). Under anaerobic conditions, it also exhibits nitric oxide reductase and FAD reductase activities. However, all these reactions are much lower than NOD activity. In Dictyostelium discoideum (Social amoeba), this protein is Flavohemoprotein B (fhbB).